The primary structure comprises 248 residues: Transcription factor MYB1 (248 aa).

HTH myb-type domains are found at residues 9–61 (KEGM…LNYL) and 62–116 (RPGI…GRRV). 2 DNA-binding regions (H-T-H motif) span residues 37–61 (WRSL…LNYL) and 89–112 (WSLI…NTNL). The tract at residues 118-144 (DQSHQHCRPNPTITSTKPADAPPANAN) is disordered.

Its subcellular location is the nucleus. Transcription activator involved in the spatiotemporal regulation of flavonoid biosynthesis specifically in the corms of Montbretia. Activates the promoters of enzymes involved in the biosynthesis of the flavonol kaempferol and the flavonol-glycoside kaempferol-rhamnoside. This chain is Transcription factor MYB1, found in Crocosmia x crocosmiiflora (Montbretia).